We begin with the raw amino-acid sequence, 73 residues long: Large ribosomal subunit protein bL31 (73 aa).

It belongs to the bacterial ribosomal protein bL31 family. Type A subfamily. In terms of assembly, part of the 50S ribosomal subunit.

Functionally, binds the 23S rRNA. This is Large ribosomal subunit protein bL31 from Ruegeria sp. (strain TM1040) (Silicibacter sp.).